Here is a 144-residue protein sequence, read N- to C-terminus: Protein archease (144 aa).

Ca(2+) contacts are provided by aspartate 14, aspartate 143, and isoleucine 144.

The protein belongs to the archease family.

Activates the tRNA-splicing ligase complex by facilitating the enzymatic turnover of catalytic subunit RtcB. Acts by promoting the guanylylation of RtcB, a key intermediate step in tRNA ligation. Can also alter the NTP specificity of RtcB such that ATP, dGTP or ITP is used efficiently. The protein is Protein archease of Aeropyrum pernix (strain ATCC 700893 / DSM 11879 / JCM 9820 / NBRC 100138 / K1).